A 635-amino-acid chain; its full sequence is Biosynthetic arginine decarboxylase (635 aa).

At lysine 100 the chain carries N6-(pyridoxal phosphate)lysine. A substrate-binding site is contributed by 282–292; the sequence is VDIGGGLGVDY.

Belongs to the Orn/Lys/Arg decarboxylase class-II family. SpeA subfamily. It depends on Mg(2+) as a cofactor. Pyridoxal 5'-phosphate serves as cofactor.

The enzyme catalyses L-arginine + H(+) = agmatine + CO2. Its pathway is amine and polyamine biosynthesis; agmatine biosynthesis; agmatine from L-arginine: step 1/1. Functionally, catalyzes the biosynthesis of agmatine from arginine. This Geotalea daltonii (strain DSM 22248 / JCM 15807 / FRC-32) (Geobacter daltonii) protein is Biosynthetic arginine decarboxylase.